Consider the following 164-residue polypeptide: Phosphopantetheine adenylyltransferase (164 aa).

Substrate is bound at residue serine 9. ATP-binding positions include 9 to 10 (SF) and histidine 17. Substrate is bound by residues lysine 41, valine 78, and arginine 92. Residues 93 to 95 (GLR), glutamate 103, and 128 to 134 (VRTITAT) contribute to the ATP site.

It belongs to the bacterial CoaD family. Homohexamer. Requires Mg(2+) as cofactor.

Its subcellular location is the cytoplasm. The catalysed reaction is (R)-4'-phosphopantetheine + ATP + H(+) = 3'-dephospho-CoA + diphosphate. Its pathway is cofactor biosynthesis; coenzyme A biosynthesis; CoA from (R)-pantothenate: step 4/5. In terms of biological role, reversibly transfers an adenylyl group from ATP to 4'-phosphopantetheine, yielding dephospho-CoA (dPCoA) and pyrophosphate. The sequence is that of Phosphopantetheine adenylyltransferase from Brucella suis (strain ATCC 23445 / NCTC 10510).